Here is a 227-residue protein sequence, read N- to C-terminus: Sperm-associated antigen 7 (227 aa).

The tract at residues 1–45 (MADLLGSILSSMEKPPSLGDQESRRKAREQAARLKKLQEQDKQQK) is disordered. An N-acetylalanine modification is found at A2. Over residues 21-45 (QESRRKAREQAARLKKLQEQDKQQK) the composition is skewed to basic and acidic residues. A Nuclear localization signal motif is present at residues 35-51 (KKLQEQDKQQKVEFRKR). Positions 46–109 (VEFRKRMEKE…DCRYVMIFKK (64 aa)) constitute an R3H domain. At S114 the chain carries Phosphoserine. The tract at residues 118-161 (LDSYRHGEEWDPQKAEEKRKLKELAQKQEEEAAQQGPAVVSPAS) is disordered. Residues 119–147 (DSYRHGEEWDPQKAEEKRKLKELAQKQEE) show a composition bias toward basic and acidic residues. Residues 122–139 (RHGEEWDPQKAEEKRKLK) carry the Nuclear localization signal motif. Phosphoserine occurs at positions 158 and 202.

Its subcellular location is the nucleus. In Mus musculus (Mouse), this protein is Sperm-associated antigen 7 (Spag7).